Reading from the N-terminus, the 621-residue chain is tRNA uridine 5-carboxymethylaminomethyl modification enzyme MnmG (621 aa).

8–13 contacts FAD; it reads GAGHAG. NAD(+) is bound at residue 269-283; the sequence is GPRYCPSIEDKIHRF.

Belongs to the MnmG family. Homodimer. Heterotetramer of two MnmE and two MnmG subunits. The cofactor is FAD.

It is found in the cytoplasm. Functionally, NAD-binding protein involved in the addition of a carboxymethylaminomethyl (cmnm) group at the wobble position (U34) of certain tRNAs, forming tRNA-cmnm(5)s(2)U34. The polypeptide is tRNA uridine 5-carboxymethylaminomethyl modification enzyme MnmG (Chlorobium phaeovibrioides (strain DSM 265 / 1930) (Prosthecochloris vibrioformis (strain DSM 265))).